Reading from the N-terminus, the 43-residue chain is Iota-conotoxin-like Fi11.6 (43 aa).

4 disulfide bridges follow: cysteine 2–cysteine 16, cysteine 9–cysteine 19, cysteine 15–cysteine 24, and cysteine 18–cysteine 35. Proline 8 is subject to 4-hydroxyproline. Proline 26 bears the 4-hydroxyproline mark. A 6'-bromotryptophan modification is found at tryptophan 30. Position 41 is a D-phenylalanine (phenylalanine 41).

It belongs to the conotoxin I1 superfamily. In terms of tissue distribution, expressed by the venom duct.

Its subcellular location is the secreted. Functionally, iota-conotoxins bind to voltage-gated sodium channels (Nav) and act as agonists by shifting the voltage-dependence of activation to more hyperpolarized levels. Produces general excitatory symptoms. The polypeptide is Iota-conotoxin-like Fi11.6 (Conus figulinus (Fig cone)).